The sequence spans 922 residues: MDYKDTLLMPKTDFPMRGNLPNREPEIQGKWEDMDIYSLVQKRTEGRPMFVLHDGPPYANGDIHMGHALNKVLKDFIVRSRSMSGYHAPYVPGWDTHGLPIETALTKNKKVKRKEMTVAEFRKLCEEYAWQQIEGQKAQFKRLGVRGDWENPYVTLKPEFEAQQIKVFGEMAKKGYIYKGKKPVYWSPSSESALAEAEIEYHDKRSPSIYVAFDVKDGKGVLTNGEKIVIWTTTPWTIPANLGIAVHPELEYSVVAAGGARYVMASALIESVAKAIGFEDHEVVQTVKGKDLEHIVAVHPLYGRDSLVMLGEHVTTDAGTGCVHTAPGHGEDDFIIGQKYGLDVLCPVDEKGHMTSEAPGFEGLFYDQANKPITEQLEEKGALLKLDFITHSYPHDWRTKKPTIFRATAQWFASIKDFRDELLEAVKKTKWVPEWGETRLYNMIRDRGDWCISRQRAWGVPIPVFYAENGEPIITDETINHVSELFREHGSNIWFEKEANELLPEGFTHPGSPNGKFTKEQDIMDVWFDSGSSHQAVLEEREDLVRPADLYLEGSDQYRGWFNSSISTAVAVTGKAPYKGVLSHGFALDGEGRKMSKSLGNVVVPAKIMNQFGADILRLWVASVDYQADVRVSDAILKQVAEVYRKIRNTFRFLHGNIADFDPAKDAIAVEDLREVDQYILIKLNSLIEKVKKAYEEYDFAVIYHAVHNFCAIELSSFYMDFAKDVVYIEHADHKDRRSMQTVFYETLLALVKLIAPILPHTADEMWSHFTFVSEKSVQLTDMPETRDIPNAKETEEKFDSFMKLRDDVLKALETARNEKIIGKSSVASLTLYPNEEAKALLSSIKEDVKQLFIVSELAIGGTEADAPEDAQSFETGKIVVAQAEGETCERCRMVSKEIGEDPDHPELCPRCAGIVKTYYQN.

The short motif at 57-67 (PYANGDIHMGH) is the 'HIGH' region element. An L-isoleucyl-5'-AMP-binding site is contributed by Glu-553. Positions 594–598 (KMSKS) match the 'KMSKS' region motif. Residue Lys-597 coordinates ATP. Zn(2+)-binding residues include Cys-889, Cys-892, Cys-909, and Cys-912.

This sequence belongs to the class-I aminoacyl-tRNA synthetase family. IleS type 1 subfamily. In terms of assembly, monomer. The cofactor is Zn(2+).

Its subcellular location is the cytoplasm. It carries out the reaction tRNA(Ile) + L-isoleucine + ATP = L-isoleucyl-tRNA(Ile) + AMP + diphosphate. In terms of biological role, catalyzes the attachment of isoleucine to tRNA(Ile). As IleRS can inadvertently accommodate and process structurally similar amino acids such as valine, to avoid such errors it has two additional distinct tRNA(Ile)-dependent editing activities. One activity is designated as 'pretransfer' editing and involves the hydrolysis of activated Val-AMP. The other activity is designated 'posttransfer' editing and involves deacylation of mischarged Val-tRNA(Ile). This is Isoleucine--tRNA ligase from Bacillus licheniformis (strain ATCC 14580 / DSM 13 / JCM 2505 / CCUG 7422 / NBRC 12200 / NCIMB 9375 / NCTC 10341 / NRRL NRS-1264 / Gibson 46).